The sequence spans 265 residues: 4-hydroxy-tetrahydrodipicolinate reductase (265 aa).

NAD(+) contacts are provided by residues 7–12 (GASGRM) and Asp33. NADP(+) is bound at residue Arg34. Residues 96-98 (GTT) and 120-123 (AANM) contribute to the NAD(+) site. Catalysis depends on His153, which acts as the Proton donor/acceptor. His154 is a binding site for (S)-2,3,4,5-tetrahydrodipicolinate. Lys157 (proton donor) is an active-site residue. Position 163-164 (163-164 (GT)) interacts with (S)-2,3,4,5-tetrahydrodipicolinate.

The protein belongs to the DapB family.

The protein localises to the cytoplasm. It catalyses the reaction (S)-2,3,4,5-tetrahydrodipicolinate + NAD(+) + H2O = (2S,4S)-4-hydroxy-2,3,4,5-tetrahydrodipicolinate + NADH + H(+). It carries out the reaction (S)-2,3,4,5-tetrahydrodipicolinate + NADP(+) + H2O = (2S,4S)-4-hydroxy-2,3,4,5-tetrahydrodipicolinate + NADPH + H(+). It functions in the pathway amino-acid biosynthesis; L-lysine biosynthesis via DAP pathway; (S)-tetrahydrodipicolinate from L-aspartate: step 4/4. Its function is as follows. Catalyzes the conversion of 4-hydroxy-tetrahydrodipicolinate (HTPA) to tetrahydrodipicolinate. This chain is 4-hydroxy-tetrahydrodipicolinate reductase, found in Burkholderia cenocepacia (strain ATCC BAA-245 / DSM 16553 / LMG 16656 / NCTC 13227 / J2315 / CF5610) (Burkholderia cepacia (strain J2315)).